The chain runs to 46 residues: Light-harvesting protein B-800/850 beta 2 chain (46 aa).

Over Ala2–Phe25 the chain is Cytoplasmic. His18 and His36 together coordinate a bacteriochlorophyll. The helical transmembrane segment at Ser26–Phe46 threads the bilayer.

The protein belongs to the antenna complex beta subunit family. In terms of assembly, the core complex is formed by different alpha and beta chains, binding bacteriochlorophyll molecules, and arranged most probably in tetrameric structures disposed around the reaction center.

The protein localises to the cell inner membrane. Functionally, antenna complexes are light-harvesting systems, which transfer the excitation energy to the reaction centers. The chain is Light-harvesting protein B-800/850 beta 2 chain (B2) from Magnetospirillum molischianum (Rhodospirillum molischianum).